The following is a 619-amino-acid chain: Probable transporter mch1 (619 aa).

Transmembrane regions (helical) follow at residues 88–108 (VISCLGAGSITAFSLYGPLFL), 120–140 (AVSIAAEISMYLPVPLFGYLC), 147–167 (PLALLSGLVFGGGYLLAAFAY), 184–204 (VMVVAFVAIGTATSCMYLAAV), 219–239 (IMLAVPIAGFGLSGMWQSQVA), 261–281 (FLFLALFLFCLGVIGTFGLRI), 377–397 (TMWWLAVGFFLVTGPGEAYIN), 428–448 (IIALTSTIARLLTGSLSDFFA), 480–500 (LAFLLPSALLLSLGYLLLSSP), 515–535 (LIGLGYGSAFSLVPIIISVVW), 541–561 (GTNWGIVAMVPAAGAAMWGVI), and 589–609 (FWAVGCTLSVWVAVVAWILAW).

Belongs to the major facilitator superfamily.

It localises to the vacuole membrane. Probable transporter. This Aspergillus fumigatus (strain ATCC MYA-4609 / CBS 101355 / FGSC A1100 / Af293) (Neosartorya fumigata) protein is Probable transporter mch1 (mch1).